Consider the following 195-residue polypeptide: Probable GTP-binding protein EngB (195 aa).

Residues 22–195 (GLPEIALAGR…WGAIKKMINR (174 aa)) enclose the EngB-type G domain. Residues 30 to 37 (GRSNVGKS), 57 to 61 (GKTQT), 75 to 78 (DVPG), 142 to 145 (TKAD), and 174 to 176 (FSS) contribute to the GTP site. Serine 37 and threonine 59 together coordinate Mg(2+).

Belongs to the TRAFAC class TrmE-Era-EngA-EngB-Septin-like GTPase superfamily. EngB GTPase family. Mg(2+) serves as cofactor.

Necessary for normal cell division and for the maintenance of normal septation. In terms of biological role, binds GTP and GDP. This is Probable GTP-binding protein EngB from Bacillus subtilis (strain 168).